The sequence spans 72 residues: MAKEDCIEMEGVVLEVLPNTMFRVELENGRIVTAHISGKMRKNYIRILTGDKVVVEITPYDLTKGRIKFRSK.

An S1-like domain is found at 1–72 (MAKEDCIEME…TKGRIKFRSK (72 aa)).

This sequence belongs to the IF-1 family. As to quaternary structure, component of the 30S ribosomal translation pre-initiation complex which assembles on the 30S ribosome in the order IF-2 and IF-3, IF-1 and N-formylmethionyl-tRNA(fMet); mRNA recruitment can occur at any time during PIC assembly.

The protein localises to the cytoplasm. Functionally, one of the essential components for the initiation of protein synthesis. Stabilizes the binding of IF-2 and IF-3 on the 30S subunit to which N-formylmethionyl-tRNA(fMet) subsequently binds. Helps modulate mRNA selection, yielding the 30S pre-initiation complex (PIC). Upon addition of the 50S ribosomal subunit IF-1, IF-2 and IF-3 are released leaving the mature 70S translation initiation complex. The chain is Translation initiation factor IF-1 from Francisella tularensis subsp. tularensis (strain WY96-3418).